Reading from the N-terminus, the 291-residue chain is Ribosomal RNA small subunit methyltransferase I (291 aa).

It belongs to the methyltransferase superfamily. RsmI family.

The protein localises to the cytoplasm. The enzyme catalyses cytidine(1402) in 16S rRNA + S-adenosyl-L-methionine = 2'-O-methylcytidine(1402) in 16S rRNA + S-adenosyl-L-homocysteine + H(+). Its function is as follows. Catalyzes the 2'-O-methylation of the ribose of cytidine 1402 (C1402) in 16S rRNA. This is Ribosomal RNA small subunit methyltransferase I from Neisseria meningitidis serogroup A / serotype 4A (strain DSM 15465 / Z2491).